A 280-amino-acid chain; its full sequence is Thioesterase pynI (280 aa).

The span at 136 to 145 (LADDSDDEDN) shows a compositional bias: acidic residues. A disordered region spans residues 136-167 (LADDSDDEDNRSDASDASDDGSTMSDEEEEDD).

Belongs to the AMT4 thioesterase family.

The protein operates within secondary metabolite biosynthesis. Functionally, thioesterase; part of the gene cluster that mediates the biosynthesis of pyranonigrins, a family of antioxidative compounds. The first step of pyranonigrins biosynthesis is performed by the hybrid PKS-NRPS synthetase that condenses 6 malonyl-CoA units to an acetyl starter unit, to form a 1,3,5-trioxotetradecane-6,8-dienyl-ACP. The enoyl reductase (ER) domain of pynA is likely to be functional during the first two rounds of polyketide chain extension, to generate the saturated C-C bonds of the alkyl side chain. PynA subsequently forms the amide bond between the acyl chain and L-serine. Although pynA has a terminal reductase domain, it appears to require the thioesterase pynI for the release of the straight-chain intermediate from pynA via the formation of a tetramic acid pyranonigrin J. The methyltransferase pynC then coverts pyranonigrin J to pyranonigrin I via N-methylation. The FAD-dependent monooxygenase pynG catalyzes an epoxidation-mediated cyclization to form the dihydro-gamma-pyrone moiety, followed by pynD-catalyzed oxidation of the alcohol to the ketone and enolization to yield the characteristic tetramic acid-fused gamma-pyrone core of pyranonigrin H. Pyranonigrin H is substrate of pynH for dehydration-mediated exo-methylene formation from the serine side chain to produce pyranonigrin E, before the oxidase pynE reduces the exo-methylene of pyranonigrin E into a pendant methyl to form pyranonigrin G. The FAD-linked oxidoreductase pynB performs the reverse reaction and converts pyranonigrin G back to pyranonigrin E. The polypeptide is Thioesterase pynI (Aspergillus niger (strain ATCC MYA-4892 / CBS 513.88 / FGSC A1513)).